The sequence spans 274 residues: MAD2L1-binding protein (274 aa).

Residues 45-78 (ASEAFCPRDCMVPVVFPGPVSQEGCCQFTCELLK) form an interaction with MAD2L1 region. The residue at position 102 (Ser-102) is a Phosphoserine.

This sequence belongs to the MAD2L1BP family. Interacts with MAD2L1.

It is found in the nucleus. The protein resides in the cytoplasm. It localises to the cytoskeleton. The protein localises to the spindle. May function to silence the spindle checkpoint and allow mitosis to proceed through anaphase by binding MAD2L1 after it has become dissociated from the MAD2L1-CDC20 complex. The chain is MAD2L1-binding protein (MAD2L1BP) from Homo sapiens (Human).